The following is a 333-amino-acid chain: Homeobox protein engrailed-2 (333 aa).

Disordered regions lie at residues 1-49 (MEEN…RALM), 95-206 (GRGG…GANL), and 223-250 (SDRPSSGPRSRKPKKKNPNKEDKRPRTA). Composition is skewed to gly residues over residues 25–36 (PGGGSGGGGGSS) and 95–117 (GRGGGAGGEGGASGAEGGGGAGG). Composition is skewed to low complexity over residues 142 to 151 (PLPAAGSDSP) and 191 to 200 (LSVSSDSDSS). The segment at residues 244–303 (DKRPRTAFTAEQLQRLKAEFQTNRYLTEQRRQSLAQELSLNESQIKIWFQNKRAKIKKAT) is a DNA-binding region (homeobox).

It belongs to the engrailed homeobox family.

It is found in the nucleus. This chain is Homeobox protein engrailed-2 (EN2), found in Homo sapiens (Human).